Here is a 765-residue protein sequence, read N- to C-terminus: MPRSPGTRLKPAKYIPVATAAALLVGSSTLFFVFTCPWLTRAVSPAVPVYNGIIFLFVLANFSMATFMDPGVFPRADEDEDKEDDFRAPLYKNVDVRGIQVRMKWCATCHFYRPPRCSHCSVCDNCVEDFDHHCPWVNNCIGRRNYRYFFLFLLSLSAHMVGVVAFGLVYVLNHAEGLGAAHTTITMAVMCVAGLFFIPVIGLTGFHVVLVTRGRTTNEQVTGKFRGGVNPFTRGCCGNVEHVLCSPLAPRYVVEPPRLPLAVSLKPPFLRPELLDRAAPLKVKLSDNGLKAGLGRSKSKGSLDRLDEKPLDLGPPLPPKIEAGTFSSDLQTPRPGSAESALSVQRTSPPTPAMYKFRPAFPTGPKVPFCGPGEQVPGPDSLTLGDDSIRSLDFVSEPSLDLPDYGPGGLHAAYPPSPPLSASDAFSGALRSLSLKASSRRGGDHVALQPLRSEGGPPTPHRSIFAPHALPNRNGSLSYDSLLNPGSPGGHACPAHPAVGMAGYHSPYLHPGATGDPPRPLPRSFSPVLGPRPREPSPVRYDNLSRTIMASIQERKDREERERLLRSQADSLFGDSGVYDAPSSYSLQQASVLSEGPRGPALRYGSRDDLVAGPGFGGARNPALQTSLSSLSSSVSRAPRTSSSSLQADQASSNAPGPRPSSGSHRSPARQGLPSPPGTPHLTILRGPQSCRLHPHGPPRATALADRAEDHPQLKTPPSKLNGQSPGLARLGLATGPPGPSASPTRHTLVKKVSGVGGTTYEISV.

Topologically, residues M1–K13 are cytoplasmic. Residues Y14–F34 traverse the membrane as a helical segment. Topologically, residues T35 to G52 are lumenal. The chain crosses the membrane as a helical span at residues I53–F73. Topologically, residues P74–Y148 are cytoplasmic. One can recognise a DHHC domain in the interval K104–L154. The S-palmitoyl cysteine intermediate role is filled by C134. The helical transmembrane segment at F149 to V169 threads the bilayer. Residues Y170–M190 lie on the Lumenal side of the membrane. A helical transmembrane segment spans residues C191–V211. Residues T212–V765 lie on the Cytoplasmic side of the membrane. The interval G293–P352 is disordered. Residues G301–L311 show a composition bias toward basic and acidic residues. S337 carries the phosphoserine modification. R441 is subject to Omega-N-methylarginine. The tract at residues L509–R540 is disordered. 5 positions are modified to phosphoserine: S606, S627, S675, S725, and S743. Residues G613 to R746 form a disordered region. Residues P622–S653 show a composition bias toward low complexity.

It belongs to the DHHC palmitoyltransferase family. ERF2/ZDHHC9 subfamily.

The protein resides in the golgi apparatus membrane. It is found in the mitochondrion membrane. The enzyme catalyses L-cysteinyl-[protein] + hexadecanoyl-CoA = S-hexadecanoyl-L-cysteinyl-[protein] + CoA. Functionally, palmitoyltransferase that catalyzes the addition of palmitate onto various protein substrates and therefore functions in several unrelated biological processes. Through the palmitoylation of ABCA1 regulates the localization of the transporter to the plasma membrane and thereby regulates its function in cholesterol and phospholipid efflux. Could also pamitoylate the D(2) dopamine receptor DRD2 and regulate its stability and localization to the plasma membrane. Could also play a role in glutamatergic transmission. The polypeptide is Palmitoyltransferase ZDHHC8 (Pan troglodytes (Chimpanzee)).